The primary structure comprises 450 residues: SAGA complex/transcription factor TFIID complex subunit Taf12 (450 aa).

Composition is skewed to polar residues over residues 1 to 10 (MNGQHSSPGT), 19 to 29 (PVNQAQFSQQR), and 190 to 212 (QNRQ…NAST). 2 disordered regions span residues 1–29 (MNGQ…SQQR) and 190–281 (QNRQ…VEKS). A compositionally biased stretch (low complexity) spans 217-236 (STASTPQLQQTQAQANAPQQ). Polar residues-rich tracts occupy residues 237-246 (RINPETSSVP) and 255-281 (ANVS…VEKS). Residue Ser297 is modified to Phosphoserine. In terms of domain architecture, Histone-fold spans 338 to 413 (NGNRLLSKRK…HLERNWNIRL (76 aa)). The segment at 426-450 (RKTGPTPSYQQKQNAIGTAKSLNKD) is disordered. Over residues 430–441 (PTPSYQQKQNAI) the composition is skewed to polar residues.

It belongs to the TAF12 family. Component of the 1.8 MDa SAGA (Spt-Ada-Gcn5 acetyltransferase) complex, which is composed of 19 subunits tra1, spt7, taf5, ngg1/ada3, sgf73, spt20, spt8, taf12, taf6, hfi1/ada1, ubp8, gcn5, ada2, spt3, sgf29, taf10, taf9, sgf11 and sus1. The SAGA complex is composed of 4 modules, namely the HAT (histone acetyltransferase) module (gcn5, ada2, ngg1/ada3 and sgf29), the DUB (deubiquitinating) module (ubp8, sgf11, sgf73 and sus1), the core or TAF (TBP-associated factor) module (taf5, taf6, taf9, taf10 and taf12), and the Tra1 or SPT (Suppressor of Ty) module (tra1, hfi1/ada1, spt3, spt7, spt8 and spt20). The Tra1/SPT module binds activators, the core module recruits TBP (TATA-binding protein), the HAT module contains the histone H3 acetyltransferase gcn5, and the DUB module comprises the histone H2B deubiquitinase ubp8. Component of the 1.2 MDa TFIID complex, which is composed of TATA-binding protein (TBP) and the 14 TBP-associated factors (TAFs). It comprises 1 copy of each taf1, taf2, taf3, taf7, taf8, taf11, taf13, 2 copies of each taf4, taf5, taf6, taf9, taf10, taf12, and 3 copies of taf14. In TFIID, taf12 heterodimerizes with taf4, forming ultimately an octamer consisting of a taf6-taf9 heterotetramer core flanked by taf4-taf12 dimers on either side, similar to the histone H2A-H2B-H3-H4 octamer.

The protein localises to the nucleus. Functions as a component of both the DNA-binding general transcription initiation factor complex TFIID and the transcription coactivator SAGA complex. Binding of TFIID to a promoter (with or without TATA element) is the initial step in pre-initiation complex (PIC) formation. TFIID plays a key role in the regulation of gene expression by RNA polymerase II through different activities such as transcription activator interaction, core promoter recognition and selectivity, TFIIA and TFIIB interaction, chromatin modification (histone acetylation by TAF1), facilitation of DNA opening and initiation of transcription. SAGA acts as a general cofactor required for essentially all RNA polymerase II transcription. At the promoters, SAGA is required for transcription pre-initiation complex (PIC) recruitment. It influences RNA polymerase II transcriptional activity through different activities such as TBP interaction (via core/TAF module) and promoter selectivity, interaction with transcription activators (via Tra1/SPT module), and chromatin modification through histone acetylation (via HAT module) and deubiquitination (via DUB module). SAGA preferentially acetylates histones H3 (to form H3K9ac, H3K14ac, H3K18ac and H3K23ac) and H2B and deubiquitinates histone H2B. SAGA interacts with DNA via upstream activating sequences (UASs). In Schizosaccharomyces pombe (strain 972 / ATCC 24843) (Fission yeast), this protein is SAGA complex/transcription factor TFIID complex subunit Taf12.